The primary structure comprises 337 residues: Phosphate acyltransferase (337 aa).

Belongs to the PlsX family. In terms of assembly, homodimer. Probably interacts with PlsY.

The protein resides in the cytoplasm. The catalysed reaction is a fatty acyl-[ACP] + phosphate = an acyl phosphate + holo-[ACP]. It participates in lipid metabolism; phospholipid metabolism. Catalyzes the reversible formation of acyl-phosphate (acyl-PO(4)) from acyl-[acyl-carrier-protein] (acyl-ACP). This enzyme utilizes acyl-ACP as fatty acyl donor, but not acyl-CoA. This chain is Phosphate acyltransferase, found in Aquifex aeolicus (strain VF5).